The sequence spans 230 residues: GTP cyclohydrolase III (230 aa).

It belongs to the archaeal-type GTP cyclohydrolase family.

It catalyses the reaction GTP + 3 H2O = 2-amino-5-formylamino-6-(5-phospho-D-ribosylamino)pyrimidin-4(3H)-one + 2 phosphate + 2 H(+). In terms of biological role, catalyzes the formation of 2-amino-5-formylamino-6-ribofuranosylamino-4(3H)-pyrimidinone ribonucleotide monophosphate and inorganic phosphate from GTP. Also has an independent pyrophosphate phosphohydrolase activity. This Saccharolobus islandicus (strain M.14.25 / Kamchatka #1) (Sulfolobus islandicus) protein is GTP cyclohydrolase III.